Here is a 357-residue protein sequence, read N- to C-terminus: Large ribosomal subunit protein mL45 (357 aa).

Residues 333–357 (EAKALPLRTTEKLEEAKKEKEQQEI) form a disordered region. The segment covering 341–357 (TTEKLEEAKKEKEQQEI) has biased composition (basic and acidic residues).

Belongs to the mitochondrion-specific ribosomal protein mL45 family.

The protein resides in the mitochondrion. In Caenorhabditis elegans, this protein is Large ribosomal subunit protein mL45 (mrpl-45).